The sequence spans 286 residues: E3 SUMO-protein ligase K-bZIP (286 aa).

Disordered stretches follow at residues 1 to 22 (MPRM…EKDE) and 106 to 130 (WTLS…SKRR).

As to quaternary structure, interacts with host HDAC1 and HDAC2, these interactions suppress HDAC activities. Interacts with protein ORF57. Interacts with protein vPK. Sumoylated.

It participates in protein modification; protein sumoylation. Its function is as follows. SUMO E3 ligase that plays a role in viral gene regulation and is essential for viral reactivation. Disrupts host G1 cell cycle control thus allowing viral transcription and translation to proceed at the early stages of infection. Catalyzes its own SUMO modification as well as that of its interacting partners such as host TP53 and RB1. Regulates viral gene expression and reactivation and may mediate the SUMOylation of viral promoters in the low methylated 'Lys-9' histone H3 (H3K9me) region which results in a diminution of viral gene expression after reactivation. SUMOylates also host histone lysine demethylase 4A/KDM4A, an essential step for complete enrichment of SUMO-2/3 on the viral genome during viral transactivation and reactivation. The polypeptide is E3 SUMO-protein ligase K-bZIP (K8) (Human herpesvirus 8 type P (isolate GK18) (HHV-8)).